Consider the following 460-residue polypeptide: Bifunctional protein GlmU (460 aa).

The interval 1-232 is pyrophosphorylase; the sequence is MAISAALILA…PDEIMGVNDR (232 aa). UDP-N-acetyl-alpha-D-glucosamine is bound by residues 9-12, Lys23, Gln75, and 80-81; these read LAAG and GT. A Mg(2+)-binding site is contributed by Asp105. UDP-N-acetyl-alpha-D-glucosamine contacts are provided by Gly142, Glu157, Asn172, and Asn230. Residue Asn230 participates in Mg(2+) binding. Residues 233–253 are linker; sequence VQLAHAARVLRQRVNLQLMLA. The segment at 254–460 is N-acetyltransferase; the sequence is GVTLIDPDQT…GWCLKKRDNG (207 aa). Arg336 and Lys354 together coordinate UDP-N-acetyl-alpha-D-glucosamine. His366 (proton acceptor) is an active-site residue. Residues Tyr369 and Asn380 each coordinate UDP-N-acetyl-alpha-D-glucosamine. Acetyl-CoA contacts are provided by residues 389-390, Ser408, Ala426, and Arg443; that span reads NY.

It in the N-terminal section; belongs to the N-acetylglucosamine-1-phosphate uridyltransferase family. In the C-terminal section; belongs to the transferase hexapeptide repeat family. As to quaternary structure, homotrimer. Requires Mg(2+) as cofactor.

Its subcellular location is the cytoplasm. It carries out the reaction alpha-D-glucosamine 1-phosphate + acetyl-CoA = N-acetyl-alpha-D-glucosamine 1-phosphate + CoA + H(+). The catalysed reaction is N-acetyl-alpha-D-glucosamine 1-phosphate + UTP + H(+) = UDP-N-acetyl-alpha-D-glucosamine + diphosphate. Its pathway is nucleotide-sugar biosynthesis; UDP-N-acetyl-alpha-D-glucosamine biosynthesis; N-acetyl-alpha-D-glucosamine 1-phosphate from alpha-D-glucosamine 6-phosphate (route II): step 2/2. The protein operates within nucleotide-sugar biosynthesis; UDP-N-acetyl-alpha-D-glucosamine biosynthesis; UDP-N-acetyl-alpha-D-glucosamine from N-acetyl-alpha-D-glucosamine 1-phosphate: step 1/1. It functions in the pathway bacterial outer membrane biogenesis; LPS lipid A biosynthesis. Functionally, catalyzes the last two sequential reactions in the de novo biosynthetic pathway for UDP-N-acetylglucosamine (UDP-GlcNAc). The C-terminal domain catalyzes the transfer of acetyl group from acetyl coenzyme A to glucosamine-1-phosphate (GlcN-1-P) to produce N-acetylglucosamine-1-phosphate (GlcNAc-1-P), which is converted into UDP-GlcNAc by the transfer of uridine 5-monophosphate (from uridine 5-triphosphate), a reaction catalyzed by the N-terminal domain. The protein is Bifunctional protein GlmU of Trichlorobacter lovleyi (strain ATCC BAA-1151 / DSM 17278 / SZ) (Geobacter lovleyi).